The chain runs to 674 residues: MGMEALRFLHVIFFFVLILHCHCGTSLSGSSDVKLLLGKIKSSLQGNSESLLLSSWNSSVPVCQWRGVKWVFSNGSPLQCSDLSSPQWTNTSLFNDSSLHLLSLQLPSANLTGSLPREIGEFSMLQSVFLNINSLSGSIPLELGYTSSLSDVDLSGNALAGVLPPSIWNLCDKLVSFKIHGNNLSGVLPEPALPNSTCGNLQVLDLGGNKFSGEFPEFITRFKGVKSLDLSSNVFEGLVPEGLGVLELESLNLSHNNFSGMLPDFGESKFGAESFEGNSPSLCGLPLKPCLGSSRLSPGAVAGLVIGLMSGAVVVASLLIGYLQNKKRKSSIESEDDLEEGDEEDEIGEKEGGEGKLVVFQGGENLTLDDVLNATGQVMEKTSYGTVYKAKLSDGGNIALRLLREGTCKDRSSCLPVIRQLGRIRHENLVPLRAFYQGKRGEKLLIYDYLPNISLHDLLHESKPRKPALNWARRHKIALGIARGLAYLHTGQEVPIIHGNIRSKNVLVDDFFFARLTEFGLDKIMVQAVADEIVSQAKSDGYKAPELHKMKKCNPRSDVYAFGILLLEILMGKKPGKSGRNGNEFVDLPSLVKAAVLEETTMEVFDLEAMKGIRSPMEEGLVHALKLAMGCCAPVTTVRPSMEEVVKQLEENRPRNRSALYSPTETRSDAETPF.

An N-terminal signal peptide occupies residues 1-25; the sequence is MGMEALRFLHVIFFFVLILHCHCGT. Topologically, residues 26-295 are extracellular; that stretch reads SLSGSSDVKL…PLKPCLGSSR (270 aa). Residues asparagine 57, asparagine 90, asparagine 95, and asparagine 110 are each glycosylated (N-linked (GlcNAc...) asparagine). 4 LRR repeats span residues 100-122, 124-146, 148-169, and 173-194; these read HLLS…IGEF, MLQS…LGYT, SLSD…SIWN, and KLVS…PALP. Residues asparagine 183 and asparagine 195 are each glycosylated (N-linked (GlcNAc...) asparagine). LRR repeat units lie at residues 200–222, 224–244, and 247–269; these read NLQV…ITRF, GVKS…EGLG, and ELES…GESK. Asparagine 252 and asparagine 257 each carry an N-linked (GlcNAc...) asparagine glycan. A helical membrane pass occupies residues 296-323; the sequence is LSPGAVAGLVIGLMSGAVVVASLLIGYL. Residues 324 to 674 lie on the Cytoplasmic side of the membrane; that stretch reads QNKKRKSSIE…ETRSDAETPF (351 aa). A disordered region spans residues 331 to 350; that stretch reads SIESEDDLEEGDEEDEIGEK. Residues 333–348 show a composition bias toward acidic residues; the sequence is ESEDDLEEGDEEDEIG. Serine 334 bears the Phosphoserine mark. The Protein kinase domain occupies 373-674; sequence NATGQVMEKT…ETRSDAETPF (302 aa). Threonine 375 is subject to Phosphothreonine. A Phosphoserine modification is found at serine 454. The tract at residues 649–674 is disordered; that stretch reads LEENRPRNRSALYSPTETRSDAETPF.

It belongs to the protein kinase superfamily.

It localises to the membrane. Its function is as follows. Does not seem to have conserved a kinase activity. The sequence is that of Putative kinase-like protein TMKL1 (TMKL1) from Arabidopsis thaliana (Mouse-ear cress).